Reading from the N-terminus, the 456-residue chain is Bifunctional protein GlmU (456 aa).

The interval 1–229 (MLNSAMSVVI…ISETDGVNNR (229 aa)) is pyrophosphorylase. UDP-N-acetyl-alpha-D-glucosamine-binding positions include 11–14 (LAAG), Lys25, Gln76, 81–82 (GT), 103–105 (YGD), Gly140, Glu154, Asn169, and Asn227. Position 105 (Asp105) interacts with Mg(2+). Asn227 provides a ligand contact to Mg(2+). A linker region spans residues 230 to 250 (LQLSRLERIYQAEQAEKLLLS). Residues 251–456 (GVMLRDPARF…QGWQRPVKKK (206 aa)) form an N-acetyltransferase region. The UDP-N-acetyl-alpha-D-glucosamine site is built by Arg333 and Lys351. His363 functions as the Proton acceptor in the catalytic mechanism. UDP-N-acetyl-alpha-D-glucosamine is bound by residues Tyr366 and Asn377. Residues Ala380, 386 to 387 (NY), Ser405, Ala423, and Arg440 each bind acetyl-CoA.

The protein in the N-terminal section; belongs to the N-acetylglucosamine-1-phosphate uridyltransferase family. It in the C-terminal section; belongs to the transferase hexapeptide repeat family. Homotrimer. Mg(2+) is required as a cofactor.

The protein localises to the cytoplasm. The enzyme catalyses alpha-D-glucosamine 1-phosphate + acetyl-CoA = N-acetyl-alpha-D-glucosamine 1-phosphate + CoA + H(+). It carries out the reaction N-acetyl-alpha-D-glucosamine 1-phosphate + UTP + H(+) = UDP-N-acetyl-alpha-D-glucosamine + diphosphate. It participates in nucleotide-sugar biosynthesis; UDP-N-acetyl-alpha-D-glucosamine biosynthesis; N-acetyl-alpha-D-glucosamine 1-phosphate from alpha-D-glucosamine 6-phosphate (route II): step 2/2. The protein operates within nucleotide-sugar biosynthesis; UDP-N-acetyl-alpha-D-glucosamine biosynthesis; UDP-N-acetyl-alpha-D-glucosamine from N-acetyl-alpha-D-glucosamine 1-phosphate: step 1/1. Its pathway is bacterial outer membrane biogenesis; LPS lipid A biosynthesis. Its function is as follows. Catalyzes the last two sequential reactions in the de novo biosynthetic pathway for UDP-N-acetylglucosamine (UDP-GlcNAc). The C-terminal domain catalyzes the transfer of acetyl group from acetyl coenzyme A to glucosamine-1-phosphate (GlcN-1-P) to produce N-acetylglucosamine-1-phosphate (GlcNAc-1-P), which is converted into UDP-GlcNAc by the transfer of uridine 5-monophosphate (from uridine 5-triphosphate), a reaction catalyzed by the N-terminal domain. This chain is Bifunctional protein GlmU, found in Salmonella dublin (strain CT_02021853).